Consider the following 132-residue polypeptide: MPRPPKCRRVEQFPGFTFFKPSGIPMSELSEVVLSVEELEAIRLRDLEGMEHEECAGKMSVSRPTFHRILASARQKVAHALINGTALRITGGNFKLVQYMLECRRCGHRWKGAICRRMLCPSCSSMDWHRIE.

This sequence belongs to the UPF0251 family.

This is UPF0251 protein PTH_0588 from Pelotomaculum thermopropionicum (strain DSM 13744 / JCM 10971 / SI).